The sequence spans 91 residues: Defensin-like protein 269 (91 aa).

A signal peptide spans Met-1–Ala-25. Intrachain disulfides connect Cys-41/Cys-82, Cys-53/Cys-72, Cys-59/Cys-77, and Cys-63/Cys-79.

The protein belongs to the DEFL family.

It is found in the secreted. This Arabidopsis thaliana (Mouse-ear cress) protein is Defensin-like protein 269.